The sequence spans 366 residues: Tripartite motif-containing protein 54 (366 aa).

The RING-type zinc finger occupies 26–82 (CPICLEMFSKPVVILPCQHNLCRKCANDVFQASNPLWQSRSSTTVSSGGRFRCPSCR). The B box-type zinc-finger motif lies at 121-163 (EQHLMCEEHEDEKINIYCLSCEVPTCSLCKVFGAHKDCEVAPL). Positions 126, 129, 149, and 155 each coordinate Zn(2+). The tract at residues 168–211 (KRQKSELSDGIAMLVAGNDRVQAVITQMEEVCQTIEENSRRQKQ) is mediates microtubule-binding and homooligomerization. The stretch at 185–258 (NDRVQAVITQ…LIRQYGDHLE (74 aa)) forms a coiled coil. The region spanning 271-329 (MEEPQMALYLQQAKELINKVGTMSKVELAGRPEPGYERMDQFTVSVEHVAEMLRTIDFQ) is the COS domain. The segment at 326–366 (IDFQPGTSGEEEDEEVAVEGEEGNAGPEEERTDGRESTGQH) is disordered. A compositionally biased stretch (acidic residues) spans 334–347 (GEEEDEEVAVEGEE). The segment covering 353–366 (EEERTDGRESTGQH) has biased composition (basic and acidic residues).

Homooligomer and heterooligomer. Interacts with TRIM63 and probably with TRIM55. Interacts with tubulin.

Its subcellular location is the cytoplasm. It localises to the cytoskeleton. It is found in the myofibril. The protein localises to the sarcomere. The protein resides in the z line. May bind and stabilize microtubules during myotubes formation. This is Tripartite motif-containing protein 54 (TRIM54) from Bos taurus (Bovine).